The chain runs to 516 residues: Zinc finger protein 83 (516 aa).

Residues 1 to 20 (MHGRKDDAQKQPVKNQLGLN) are disordered. The C2H2-type 1; degenerate zinc-finger motif lies at 93 to 115 (YKCSERGKAFHQGLHFTIHQIIH). C2H2-type zinc fingers lie at residues 121–143 (FKCD…QRIH), 149–171 (YKCN…RRIH), 177–199 (YKCN…QRIH), 205–227 (YKCN…RTIH), 233–255 (YECN…LIIH), 261–283 (YRCN…QRIH), 289–311 (YKCN…WRIH), 317–339 (YKCN…WRIH), 345–367 (YKCN…LIIH), 373–395 (YKCD…HRIH), 401–423 (YKCD…WRIH), 429–451 (YKCN…RKIH), 457–479 (FKCN…HAIH), and 485–507 (FKCN…QRFH).

Belongs to the krueppel C2H2-type zinc-finger protein family.

It is found in the nucleus. Functionally, may be involved in transcriptional regulation. This chain is Zinc finger protein 83 (ZNF83), found in Homo sapiens (Human).